The following is a 400-amino-acid chain: Nicotinate phosphoribosyltransferase (400 aa).

The residue at position 220 (His-220) is a Phosphohistidine; by autocatalysis.

Belongs to the NAPRTase family. Transiently phosphorylated on a His residue during the reaction cycle. Phosphorylation strongly increases the affinity for substrates and increases the rate of nicotinate D-ribonucleotide production. Dephosphorylation regenerates the low-affinity form of the enzyme, leading to product release.

The enzyme catalyses nicotinate + 5-phospho-alpha-D-ribose 1-diphosphate + ATP + H2O = nicotinate beta-D-ribonucleotide + ADP + phosphate + diphosphate. It participates in cofactor biosynthesis; NAD(+) biosynthesis; nicotinate D-ribonucleotide from nicotinate: step 1/1. Functionally, catalyzes the synthesis of beta-nicotinate D-ribonucleotide from nicotinate and 5-phospho-D-ribose 1-phosphate at the expense of ATP. This is Nicotinate phosphoribosyltransferase from Shigella sonnei (strain Ss046).